The following is an 865-amino-acid chain: Protein translocase subunit SecA (865 aa).

ATP contacts are provided by residues Gln-85, 103 to 107, and Asp-505; that span reads GEGKT. Zn(2+)-binding residues include Cys-847, Cys-849, Cys-858, and His-859.

The protein belongs to the SecA family. As to quaternary structure, monomer and homodimer. Part of the essential Sec protein translocation apparatus which comprises SecA, SecYEG and auxiliary proteins SecDF. Other proteins may also be involved. Zn(2+) serves as cofactor.

It is found in the cell membrane. The protein localises to the cytoplasm. It catalyses the reaction ATP + H2O + cellular proteinSide 1 = ADP + phosphate + cellular proteinSide 2.. Functionally, part of the Sec protein translocase complex. Interacts with the SecYEG preprotein conducting channel. Has a central role in coupling the hydrolysis of ATP to the transfer of proteins into and across the cell membrane, serving as an ATP-driven molecular motor driving the stepwise translocation of polypeptide chains across the membrane. The protein is Protein translocase subunit SecA of Lactococcus lactis subsp. lactis (strain IL1403) (Streptococcus lactis).